The following is a 157-amino-acid chain: SsrA-binding protein (157 aa).

The protein belongs to the SmpB family.

The protein localises to the cytoplasm. Functionally, required for rescue of stalled ribosomes mediated by trans-translation. Binds to transfer-messenger RNA (tmRNA), required for stable association of tmRNA with ribosomes. tmRNA and SmpB together mimic tRNA shape, replacing the anticodon stem-loop with SmpB. tmRNA is encoded by the ssrA gene; the 2 termini fold to resemble tRNA(Ala) and it encodes a 'tag peptide', a short internal open reading frame. During trans-translation Ala-aminoacylated tmRNA acts like a tRNA, entering the A-site of stalled ribosomes, displacing the stalled mRNA. The ribosome then switches to translate the ORF on the tmRNA; the nascent peptide is terminated with the 'tag peptide' encoded by the tmRNA and targeted for degradation. The ribosome is freed to recommence translation, which seems to be the essential function of trans-translation. This is SsrA-binding protein from Rhodococcus jostii (strain RHA1).